An 82-amino-acid chain; its full sequence is U7-hexatoxin-Mg1a (82 aa).

The first 26 residues, 1 to 26 (MRTIVFLIVSILLLSSAVLMLAEGNA), serve as a signal peptide directing secretion. A propeptide spanning residues 27-44 (ASHELQEYPIEESLEEQR) is cleaved from the precursor. Disulfide bonds link Cys46/Cys62, Cys51/Cys67, Cys61/Cys77, and Cys69/Cys75. At Arg80 the chain carries Arginine amide.

This sequence belongs to the rTX family. In terms of tissue distribution, expressed by the venom gland.

It localises to the secreted. In terms of biological role, induces flaccid paralysis when injected into lepidopteran larvae. Intracranial injection into mice causes awkwardness of movement and laboured respiration until death. The protein is U7-hexatoxin-Mg1a of Macrothele gigas (Japanese funnel web spider).